A 60-amino-acid chain; its full sequence is Large ribosomal subunit protein bL32 (60 aa).

The tract at residues 1 to 60 is disordered; that stretch reads MAVQQNKKSRSARDMRRSHDALEASTLSVEKSTGEVHLRHHVSPEGVYRGRKVIDKGADE. The span at 11–22 shows a compositional bias: basic and acidic residues; it reads SARDMRRSHDAL.

Belongs to the bacterial ribosomal protein bL32 family.

In Ectopseudomonas mendocina (strain ymp) (Pseudomonas mendocina), this protein is Large ribosomal subunit protein bL32.